A 258-amino-acid polypeptide reads, in one-letter code: Acyl-[acyl-carrier-protein]--UDP-N-acetylglucosamine O-acyltransferase (258 aa).

The protein belongs to the transferase hexapeptide repeat family. LpxA subfamily. In terms of assembly, homotrimer.

It localises to the cytoplasm. It carries out the reaction a (3R)-hydroxyacyl-[ACP] + UDP-N-acetyl-alpha-D-glucosamine = a UDP-3-O-[(3R)-3-hydroxyacyl]-N-acetyl-alpha-D-glucosamine + holo-[ACP]. Its pathway is glycolipid biosynthesis; lipid IV(A) biosynthesis; lipid IV(A) from (3R)-3-hydroxytetradecanoyl-[acyl-carrier-protein] and UDP-N-acetyl-alpha-D-glucosamine: step 1/6. Functionally, involved in the biosynthesis of lipid A, a phosphorylated glycolipid that anchors the lipopolysaccharide to the outer membrane of the cell. The sequence is that of Acyl-[acyl-carrier-protein]--UDP-N-acetylglucosamine O-acyltransferase from Pseudomonas putida (strain W619).